Consider the following 514-residue polypeptide: Ferrochelatase-2, chloroplastic (514 aa).

This sequence belongs to the ferrochelatase family.

Its subcellular location is the plastid. The protein resides in the chloroplast. The catalysed reaction is heme b + 2 H(+) = protoporphyrin IX + Fe(2+). It participates in porphyrin-containing compound metabolism; protoheme biosynthesis; protoheme from protoporphyrin-IX: step 1/1. Functionally, catalyzes the ferrous insertion into protoporphyrin IX. In Cucumis sativus (Cucumber), this protein is Ferrochelatase-2, chloroplastic (HEMH).